A 203-amino-acid chain; its full sequence is RNA annealing protein YRA2 (203 aa).

At methionine 1 the chain carries N-acetylmethionine. 2 disordered regions span residues 1–60 and 134–203; these read MDKA…REEP and EIYQ…YMKG. Positions 11–20 are enriched in polar residues; it reads NSHTDSSSNH. Positions 47–60 are enriched in basic and acidic residues; sequence SRSKDRLYREREEP. The RRM domain maps to 64 to 138; that stretch reads KRIRISKIPL…AKIEVEIYQP (75 aa). Basic residues-rich tracts occupy residues 139–153 and 163–180; these read QRKHSRMNAHNRRKQ and PGSHYRQRPNRVSKKNKG.

The protein belongs to the YRA1 family. As to quaternary structure, associates with mRNPs. Interacts with YRA1.

It localises to the nucleus. Functionally, involved in export of poly(A) mRNAs from the nucleus. Recruited to the coding sequences as well as poly-A sites of active genes. The protein is RNA annealing protein YRA2 (YRA2) of Saccharomyces cerevisiae (strain RM11-1a) (Baker's yeast).